A 123-amino-acid chain; its full sequence is Small ribosomal subunit protein uS12 (123 aa).

The segment at 1-22 (MATINQLVRQPRKRSVEKSDVP) is disordered. Residue Asp-89 is modified to 3-methylthioaspartic acid. The segment at 100–123 (GSLDTSGVKGRNQGRSKYGTKRPK) is disordered. Positions 111-123 (NQGRSKYGTKRPK) are enriched in basic residues.

This sequence belongs to the universal ribosomal protein uS12 family. Part of the 30S ribosomal subunit. Contacts proteins S8 and S17. May interact with IF1 in the 30S initiation complex.

In terms of biological role, with S4 and S5 plays an important role in translational accuracy. Functionally, interacts with and stabilizes bases of the 16S rRNA that are involved in tRNA selection in the A site and with the mRNA backbone. Located at the interface of the 30S and 50S subunits, it traverses the body of the 30S subunit contacting proteins on the other side and probably holding the rRNA structure together. The combined cluster of proteins S8, S12 and S17 appears to hold together the shoulder and platform of the 30S subunit. The sequence is that of Small ribosomal subunit protein uS12 from Pseudomonas putida (strain GB-1).